The primary structure comprises 198 residues: Recombination protein RecR (198 aa).

The segment at 57–72 (CSVCGHITENDPCYIC) adopts a C4-type zinc-finger fold. The Toprim domain maps to 80–175 (SVICVVEDDK…KVTRLAQGLS (96 aa)).

Belongs to the RecR family.

May play a role in DNA repair. It seems to be involved in an RecBC-independent recombinational process of DNA repair. It may act with RecF and RecO. The chain is Recombination protein RecR from Staphylococcus aureus (strain Mu3 / ATCC 700698).